We begin with the raw amino-acid sequence, 276 residues long: Nickel import system permease protein NikC (276 aa).

Helical transmembrane passes span 10–30 (LIFFVFVAFIFVVIVLQFFVS), 73–93 (LFVTVLTLIAIVVIGVTLGLF), 108–128 (FIDVGLSIPEFIIMIALASFF), 186–206 (IIPAIIVLMVVDFGKIILYIS), and 238–258 (IMLIAPASVIAITILIFNLTG). The ABC transmembrane type-1 domain occupies 69–258 (ARSTLFVTVL…ITILIFNLTG (190 aa)).

The protein belongs to the binding-protein-dependent transport system permease family. OppBC subfamily. As to quaternary structure, the complex is composed of two ATP-binding proteins (NikD and NikE), two transmembrane proteins (NikB and NikC) and a solute-binding protein (NikA).

The protein localises to the cell membrane. Its function is as follows. Part of the ABC transporter complex NikABCDE (Opp2) involved in nickel import. Probably responsible for the translocation of the substrate across the membrane. The protein is Nickel import system permease protein NikC of Staphylococcus aureus (strain Mu50 / ATCC 700699).